The sequence spans 138 residues: ATP synthase epsilon chain (138 aa).

The protein belongs to the ATPase epsilon chain family. As to quaternary structure, F-type ATPases have 2 components, CF(1) - the catalytic core - and CF(0) - the membrane proton channel. CF(1) has five subunits: alpha(3), beta(3), gamma(1), delta(1), epsilon(1). CF(0) has three main subunits: a, b and c.

The protein localises to the cell inner membrane. Produces ATP from ADP in the presence of a proton gradient across the membrane. This chain is ATP synthase epsilon chain, found in Methylibium petroleiphilum (strain ATCC BAA-1232 / LMG 22953 / PM1).